Reading from the N-terminus, the 173-residue chain is Crossover junction endodeoxyribonuclease RuvC (173 aa).

Active-site residues include Asp8, Glu67, and Asp139. Asp8, Glu67, and Asp139 together coordinate Mg(2+).

This sequence belongs to the RuvC family. In terms of assembly, homodimer which binds Holliday junction (HJ) DNA. The HJ becomes 2-fold symmetrical on binding to RuvC with unstacked arms; it has a different conformation from HJ DNA in complex with RuvA. In the full resolvosome a probable DNA-RuvA(4)-RuvB(12)-RuvC(2) complex forms which resolves the HJ. The cofactor is Mg(2+).

The protein localises to the cytoplasm. It carries out the reaction Endonucleolytic cleavage at a junction such as a reciprocal single-stranded crossover between two homologous DNA duplexes (Holliday junction).. Its function is as follows. The RuvA-RuvB-RuvC complex processes Holliday junction (HJ) DNA during genetic recombination and DNA repair. Endonuclease that resolves HJ intermediates. Cleaves cruciform DNA by making single-stranded nicks across the HJ at symmetrical positions within the homologous arms, yielding a 5'-phosphate and a 3'-hydroxyl group; requires a central core of homology in the junction. The consensus cleavage sequence is 5'-(A/T)TT(C/G)-3'. Cleavage occurs on the 3'-side of the TT dinucleotide at the point of strand exchange. HJ branch migration catalyzed by RuvA-RuvB allows RuvC to scan DNA until it finds its consensus sequence, where it cleaves and resolves the cruciform DNA. The polypeptide is Crossover junction endodeoxyribonuclease RuvC (Salmonella choleraesuis (strain SC-B67)).